Reading from the N-terminus, the 473-residue chain is ATP synthase subunit beta (473 aa).

158-165 (GGAGVGKT) is an ATP binding site.

It belongs to the ATPase alpha/beta chains family. F-type ATPases have 2 components, CF(1) - the catalytic core - and CF(0) - the membrane proton channel. CF(1) has five subunits: alpha(3), beta(3), gamma(1), delta(1), epsilon(1). CF(0) has three main subunits: a(1), b(2) and c(9-12). The alpha and beta chains form an alternating ring which encloses part of the gamma chain. CF(1) is attached to CF(0) by a central stalk formed by the gamma and epsilon chains, while a peripheral stalk is formed by the delta and b chains.

It is found in the cell membrane. It carries out the reaction ATP + H2O + 4 H(+)(in) = ADP + phosphate + 5 H(+)(out). Functionally, produces ATP from ADP in the presence of a proton gradient across the membrane. The catalytic sites are hosted primarily by the beta subunits. The chain is ATP synthase subunit beta from Priestia megaterium (strain ATCC 12872 / QMB1551) (Bacillus megaterium).